A 287-amino-acid polypeptide reads, in one-letter code: Inorganic pyrophosphatase (287 aa).

Arg79 lines the diphosphate pocket. Positions 116, 121, and 153 each coordinate Mg(2+).

The protein belongs to the PPase family. It depends on Mg(2+) as a cofactor.

The protein resides in the cytoplasm. It catalyses the reaction diphosphate + H2O = 2 phosphate + H(+). The sequence is that of Inorganic pyrophosphatase (IPP1) from Candida glabrata (strain ATCC 2001 / BCRC 20586 / JCM 3761 / NBRC 0622 / NRRL Y-65 / CBS 138) (Yeast).